The following is a 327-amino-acid chain: Probable cell division protein WhiA (327 aa).

Positions 275 to 308 (SLEELGRLADPQMTKDAVAGRIRRLLTTADKRAR) form a DNA-binding region, H-T-H motif.

This sequence belongs to the WhiA family.

Functionally, involved in cell division and chromosome segregation. This Corynebacterium efficiens (strain DSM 44549 / YS-314 / AJ 12310 / JCM 11189 / NBRC 100395) protein is Probable cell division protein WhiA.